Consider the following 231-residue polypeptide: NADH-ubiquinone oxidoreductase chain 4 (231 aa).

6 helical membrane passes run 1–21 (PIAG…YGII), 34–54 (LFLP…LTCL), 63–85 (IAYS…TPWG), 89–111 (AMAL…NMTY), 124–146 (GLHN…NIAI), and 169–189 (TIII…HMFL).

This sequence belongs to the complex I subunit 4 family.

The protein resides in the mitochondrion membrane. The catalysed reaction is a ubiquinone + NADH + 5 H(+)(in) = a ubiquinol + NAD(+) + 4 H(+)(out). In terms of biological role, core subunit of the mitochondrial membrane respiratory chain NADH dehydrogenase (Complex I) that is believed to belong to the minimal assembly required for catalysis. Complex I functions in the transfer of electrons from NADH to the respiratory chain. The immediate electron acceptor for the enzyme is believed to be ubiquinone. This chain is NADH-ubiquinone oxidoreductase chain 4 (MT-ND4), found in Crotalus lepidus (Banded rock rattlesnake).